The sequence spans 631 residues: tRNA uridine 5-carboxymethylaminomethyl modification enzyme MnmG (631 aa).

Residues 13 to 18, V125, and S180 each bind FAD; that span reads GGGHAG. 273-287 lines the NAD(+) pocket; that stretch reads GPRYCPSIEDKVMRF. Q370 provides a ligand contact to FAD.

It belongs to the MnmG family. As to quaternary structure, homodimer. Heterotetramer of two MnmE and two MnmG subunits. Requires FAD as cofactor.

It localises to the cytoplasm. In terms of biological role, NAD-binding protein involved in the addition of a carboxymethylaminomethyl (cmnm) group at the wobble position (U34) of certain tRNAs, forming tRNA-cmnm(5)s(2)U34. The polypeptide is tRNA uridine 5-carboxymethylaminomethyl modification enzyme MnmG (Vibrio campbellii (strain ATCC BAA-1116)).